A 286-amino-acid polypeptide reads, in one-letter code: Bifunctional protein FolD (286 aa).

Residues 165 to 167, S190, and V231 contribute to the NADP(+) site; that span reads GRS.

Belongs to the tetrahydrofolate dehydrogenase/cyclohydrolase family. Homodimer.

It catalyses the reaction (6R)-5,10-methylene-5,6,7,8-tetrahydrofolate + NADP(+) = (6R)-5,10-methenyltetrahydrofolate + NADPH. It carries out the reaction (6R)-5,10-methenyltetrahydrofolate + H2O = (6R)-10-formyltetrahydrofolate + H(+). It participates in one-carbon metabolism; tetrahydrofolate interconversion. Functionally, catalyzes the oxidation of 5,10-methylenetetrahydrofolate to 5,10-methenyltetrahydrofolate and then the hydrolysis of 5,10-methenyltetrahydrofolate to 10-formyltetrahydrofolate. The chain is Bifunctional protein FolD from Bacillus cereus (strain AH187).